Consider the following 297-residue polypeptide: Large ribosomal subunit protein uL15m (297 aa).

The transit peptide at 1 to 21 (MSGNGVHGVHGALQLLRSLPK) directs the protein to the mitochondrion. Residues 23–69 (SLANLRPNPGSKKPERRRGRGRYRGRKCGRGHKGERQRGNRPRLGFE) are disordered. Positions 36–53 (PERRRGRGRYRGRKCGRG) are enriched in basic residues.

This sequence belongs to the universal ribosomal protein uL15 family. Component of the mitochondrial ribosome large subunit (39S) which comprises a 16S rRNA and about 50 distinct proteins.

It is found in the mitochondrion. In Gallus gallus (Chicken), this protein is Large ribosomal subunit protein uL15m (MRPL15).